The chain runs to 246 residues: Small ribosomal subunit protein uS2c (246 aa).

The protein belongs to the universal ribosomal protein uS2 family.

The protein resides in the plastid. The protein localises to the chloroplast. This chain is Small ribosomal subunit protein uS2c (rps2), found in Pelargonium hortorum (Common geranium).